Consider the following 1372-residue polypeptide: Serine protease pic autotransporter (1372 aa).

An N-terminal signal peptide occupies residues 1-55 (MNKVYSLKYCPVTGGLIAVSELARRVIKKTCRRLTHILLAGIPAICLCYSQISQA). In terms of domain architecture, Peptidase S6 spans 56–301 (GIVRSDIAYQ…NVIPTDYLNQ (246 aa)). Active-site charge relay system residues include His127, Asp155, and Ser258. Residues 1106 to 1372 (DTNGDAGAWA…AVNANFRYMF (267 aa)) form the Autotransporter domain.

Post-translationally, cleaved to release the mature protein from the outer membrane.

The protein resides in the periplasm. It localises to the secreted. It is found in the cell surface. The protein localises to the cell outer membrane. Functionally, involved in intestinal colonization, displays in vitro mucinolytic activity, serum resistance, and hemagglutination. Important to penetrate the intestinal mucus layer. The polypeptide is Serine protease pic autotransporter (pic) (Shigella flexneri).